The following is a 1125-amino-acid chain: MKRGLRRILLPEERKEVQGVVYRGVGEDMDCSKESFKVDIEGDMCRLEDFIKNRRKLSKYEDENLCPLHHAAAEGQVELMELIINGSSCEVLNIMDGYGNTPLHCAAEKNQVESVKFLLSQGANPNLRNRNMMSPLHIAVHGMYNEVIKVLTEHKATNINLEGENGNTALMSTCAKDNSEALQILLEKGAKLCKSNKWGDYPVHQAAFSGAKKCMELILAYGEKNGYSRETHINFVNHKKASPLHLAVQSGDLDMIKMCLDNGAHIDMMENAKCMALHFAATQGATDIVKLMISSYTGSSDIVNAVDGNQETLLHRASLFDHHDLAEYLISVGADINSTDSEGRSPLILATASASWNIVNLLLCKGAKVDIKDHLGRNFLHLTVQQPYGLRNLRPEFMQMQHIKELVMDEDNDGCTPLHYACRQGVPVSVNNLLGFNVSIHSKSKDKKSPLHFAASYGRINTCQRLLQDISDTRLLNEGDLHGMTPLHLAAKNGHDKVVQLLLKKGALFLSDHNGWTALHHASMGGYTQTMKVILDTNLKCTDRLDEEGNTALHFAAREGHAKAVAMLLSYNADILLNKKQASFLHIALHNKRKEVVLTTIRNKRWDECLQVFTHNSPSNRCPIMEMVEYLPECMKVLLDFCMIPSTEDKSCQDYHIEYNFKYLQCPLSMTKKVAPTQDVVYEPLTILNVMVQHNRIELLNHPVCREYLLMKWCAYGFRAHMMNLGSYCLGLIPMTLLVVKIQPGMAFNSTGIINGTSSTHEERIDTLNSFPIKICMILVFLSSIFGYCKEVIQIFQQKRNYFLDYNNALEWVIYTTSIIFVLPLFLNIPAYMQWQCGAIAIFFYWMNFLLYLQRFENCGIFIVMLEVIFKTLLRSTGVFIFLLLAFGLSFYVLLNFQDAFSTPLLSLIQTFSMMLGDINYRDAFLEPLFRNELAYPVLTFGQLIAFTMFVPIVLMNLLIGLAVGDIAEVQKHASLKRIAMQVELHTNLEKKLPLWYLRKVDQRSTIVYPNRPRHGRMLRFFHYFLNMQETRQEVPNIDTCLEMEILKQKYRLKDLTSLLEKQHELIKLIIQKMEIISETEDEDNHCSFQDRFKKERLEQMHSKWNFVLNAVKTKTHCSISHPDF.

Residues 1–721 (MKRGLRRILL…KWCAYGFRAH (721 aa)) lie on the Cytoplasmic side of the membrane. 9 ANK repeats span residues 63-94 (ENLC…VLNI), 98-127 (YGNT…NPNL), 131-161 (NMMS…NINL), 165-194 (NGNT…KLCK), 198-227 (WGDY…KNGY), 239-268 (KKAS…HIDM), 272-301 (AKCM…GSSD), 309-338 (NQET…DINS), and 342-371 (EGRS…KVDI). Intrachain disulfides connect C193–C666, C463–C666, C609–C622, C622–C666, and C634–C859. Residue P395 is modified to 4-hydroxyproline; transient. ANK repeat units lie at residues 413 to 442 (DGCT…SIHS), 446 to 475 (DKKS…DTRL), 482 to 511 (HGMT…LFLS), 514 to 543 (NGWT…KCTD), and 548 to 577 (EGNT…DILL). Residues C415 and C422 each contribute to the (E)-cinnamaldehyde site. Position 622 (C622) interacts with (E)-cinnamaldehyde. Position 634 is a cysteine sulfenic acid (-SOH); transient; in hyperoxia (C634). Residues C642, C666, and K712 each contribute to the (E)-cinnamaldehyde site. Residues 722–742 (MMNLGSYCLGLIPMTLLVVKI) form a helical membrane-spanning segment. Residues 743-767 (QPGMAFNSTGIINGTSSTHEERIDT) lie on the Extracellular side of the membrane. N-linked (GlcNAc...) asparagine glycosylation is found at N749 and N755. The helical transmembrane segment at 768 to 788 (LNSFPIKICMILVFLSSIFGY) threads the bilayer. Over 789–806 (CKEVIQIFQQKRNYFLDY) the chain is Cytoplasmic. Ca(2+)-binding residues include E791, Q794, N808, and E811. A helical transmembrane segment spans residues 807 to 827 (NNALEWVIYTTSIIFVLPLFL). The Extracellular segment spans residues 828 to 832 (NIPAY). Residues 833–853 (MQWQCGAIAIFFYWMNFLLYL) form a helical membrane-spanning segment. Topologically, residues 854 to 876 (QRFENCGIFIVMLEVIFKTLLRS) are cytoplasmic. At C859 the chain carries Cysteine sulfenic acid (-SOH); transient; in hyperoxia. Residues 877–897 (TGVFIFLLLAFGLSFYVLLNF) form a helical membrane-spanning segment. The Extracellular portion of the chain corresponds to 898 to 904 (QDAFSTP). An intramembrane region (pore-forming) is located at residues 905–925 (LLSLIQTFSMMLGDINYRDAF). Over 926 to 937 (LEPLFRNELAYP) the chain is Extracellular. A helical membrane pass occupies residues 938–959 (VLTFGQLIAFTMFVPIVLMNLL). Topologically, residues 960 to 1125 (IGLAVGDIAE…THCSISHPDF (166 aa)) are cytoplasmic. A coiled-coil region spans residues 1044-1073 (MEILKQKYRLKDLTSLLEKQHELIKLIIQK). A 1,2-diacyl-sn-glycero-3-phospho-(1D-myo-inositol) is bound at residue 1048 to 1054 (KQKYRLK).

It belongs to the transient receptor (TC 1.A.4) family. In terms of assembly, homotetramer. Interacts with TMEM100. Interacts with EGLN1. Interacts with the scorpion wasabi receptor toxin at the same site that electrophiles but in a non-covalent manner. TRPA1 activation by electrophiles occurs though covalent modification of specific cysteine residues in the N-terminal cytoplasmic domain. In terms of processing, hydroxylation is required for TRPA1 activity inhibition in normoxia. In hypoxia, the decrease in oxygen concentration diminishes the activity of the hydroxylase EGLN1, thus relieving TRPA1 from inhibition and ultimately leading to channel activation. Post-translationally, oxidation of Cys-634 and Cys-859 in hyperoxia may override the hydroxylase EGLN1-mediated inhibition, causing TRPA1 activation. As to expression, expressed in inner ear (at protein level). Specifically expressed in a subset of nociceptive neurons. Expressed in the same neurons that TRPV1. In contrast, it is not expressed in neurons expressing TRPM8. Expressed in the superior cervical ganglion of vagus nerve. Expressed in the inferior ganglion (nodose ganglion) of vagus nerve. Expressed in dorsal root ganglia neurons.

It localises to the cell membrane. The catalysed reaction is Ca(2+)(in) = Ca(2+)(out). It carries out the reaction Mg(2+)(in) = Mg(2+)(out). The enzyme catalyses Na(+)(in) = Na(+)(out). It catalyses the reaction K(+)(in) = K(+)(out). The catalysed reaction is Zn(2+)(in) = Zn(2+)(out). With respect to regulation, electrophilic ligands activate the channel by covalent modification of intracellular cysteines. Cys-622 plays a key role in covalent binding of electrophiles. Extracellular Ca(2+) both potentiates and inactivates TRPA1; a rapid potentiation follows by slow desensitization. Activated by increase in intracellular Ca(2+) concentration. Inhibited by the potent blocker of TRPV channels ruthenium red, A-967079. Activated by icilin, sulfhydryl reactive agent MTSEA, N-methyl maleimide (NMM), and PF-4840154. Also activated by hyperoxia. Activated by intracellular Zn(2+). TRPA1 activation may critically depend on the presence of small intracellular compounds such as polyphosphates. In terms of biological role, ligand-activated Ca(2+)-permeable, nonselective cation channel. Involved in pain detection and possibly also in cold perception, oxygen concentration perception, cough, itch, and inner ear function. Has a relatively high Ca(2+) selectivity, with a preference for divalent over monovalent cations (Ca(2+) &gt; Ba(2+) &gt; Mg(2+) &gt; NH4(+) &gt; Li(+) &gt; K(+)), the influx of cation into the cytoplasm, leads to membrane depolarization. Has a central role in the pain response to endogenous inflammatory mediators, such as bradykinin and to a diverse array of irritants. Activated by a large variety of structurally unrelated electrophilic and non-electrophilic chemical compounds, such as allylthiocyanate (AITC) from mustard oil or wasabi, cinnamaldehyde, diallyl disulfide (DADS) from garlic, and acrolein, an environmental irritant. Electrophilic ligands activate TRPA1 by interacting with critical N-terminal Cys residues in a covalent manner. Non-electrophile agonists bind at distinct sites in the transmembrane domain to promote channel activation. Also acts as an ionotropic cannabinoid receptor by being activated by delta(9)-tetrahydrocannabinol (THC), the psychoactive component of marijuana. May be a component for the mechanosensitive transduction channel of hair cells in inner ear, thereby participating in the perception of sounds. The chain is Transient receptor potential cation channel subfamily A member 1 from Mus musculus (Mouse).